An 824-amino-acid polypeptide reads, in one-letter code: C-Jun-amino-terminal kinase-interacting protein 2 (824 aa).

Disordered regions lie at residues 1–28 (MADRAEMFSLSTFHSLSPPGCRPPQDIS), 40–160 (ITDD…GFDL), 172–349 (CSPA…DSPW), and 361–501 (EGSS…APRD). The span at 77–110 (DFQEFEMIDDNEEEDDEDEEEEEEEEEGDGEGQE) shows a compositional bias: acidic residues. Residues 110-275 (EGGDPGSEAP…RMISSISETE (166 aa)) form a JNK-binding domain (JBD) region. The segment covering 141–156 (LRLTTLGAQDSLNNNG) has biased composition (polar residues). The necessary for interaction with FGF13 stretch occupies residues 239–498 (GRGGRRSSQE…PGGRGTGPSA (260 aa)). A phosphoserine mark is found at S254, S302, and S305. Over residues 268-305 (ISSISETELELSSDGGSSSSGRSSHLTNSIEEASSPAS) the composition is skewed to low complexity. Acidic residues predominate over residues 327-346 (TNSEYESGSESEPDLSEDAD). Pro residues predominate over residues 416 to 432 (APPPPAPAAPRPGPAQP). Positions 451 to 467 (AAPGRAARPGRACSAAC) are enriched in low complexity. The segment covering 468–484 (SEEEDEEDDEEEEDAED) has biased composition (acidic residues). The 62-residue stretch at 604–665 (EREQTHRAVF…PAFYAHAVPG (62 aa)) folds into the SH3 domain. The PID domain occupies 677–813 (PCWVERFDVQ…FLEYYQEHLA (137 aa)).

Belongs to the JIP scaffold family. Forms homo- or heterooligomeric complexes. Binds specific components of the JNK signaling pathway namely JNK1, JNK2, JNK3, MAP2K7, MAP3K10, MAP3K11, MAP3K12 and MAPK13. Also binds the proline-rich domain-containing splice variant of apolipoprotein E receptor 2 (ApoER2). Binds the cytoplasmic tails of LRP1 and LRP2 (Megalin). Binds the TPR motif-containing C-terminal of kinesin light chain, Klc1, pre-assembled MAPK8IP1 scaffolding complexes are then transported as a cargo of kinesin, to the required subcellular location. Interacts with the cytoplasmic domain of APP. Interacts with DCLK2. Interacts with TIAM1 and TIAM2. Interacts with FGF13; enables the interaction with MAPK13 and may regulate the MAPK8IP2 scaffolding activity. Interacts with SH3RF2. Expressed mainly in the brain and pancreas, including insulin-secreting cells. In the nervous system, more abundantly expressed in the cerebellum, pituitary gland, occipital lobe and the amygdala. Also expressed in fetal brain. Very low levels found in uterus, ovary, prostate, colon, testis, adrenal gland, thyroid gland and salivary gland.

Its subcellular location is the cytoplasm. Its function is as follows. The JNK-interacting protein (JIP) group of scaffold proteins selectively mediates JNK signaling by aggregating specific components of the MAPK cascade to form a functional JNK signaling module. JIP2 inhibits IL1 beta-induced apoptosis in insulin-secreting cells. May function as a regulator of vesicle transport, through interactions with the JNK-signaling components and motor proteins. This is C-Jun-amino-terminal kinase-interacting protein 2 (MAPK8IP2) from Homo sapiens (Human).